We begin with the raw amino-acid sequence, 497 residues long: Acetyltransferase adrJ (497 aa).

Active-site proton acceptor residues include H174 and D422. The segment at S430–V451 is disordered.

Belongs to the plant acyltransferase family. In terms of assembly, monomer.

The protein operates within secondary metabolite biosynthesis; terpenoid biosynthesis. Acetyltransferase; part of the gene cluster that mediates the biosynthesis of andrastins, meroterpenoid compounds that exhibit inhibitory activity against ras farnesyltransferase, suggesting that they could be promising leads for antitumor agents. The first step of the pathway is the synthesis of 3,5-dimethylorsellinic acid (DMOA) by the polyketide synthase adrD via condensation of one acetyl-CoA starter unit with 3 malonyl-CoA units and 2 methylations. DMAO is then converted to farnesyl-DMAO by the prenyltransferase adrG. The methyltransferase adrK catalyzes the methylation of the carboxyl group of farnesyl-DMAO to farnesyl-DMAO methyl ester which is further converted to epoxyfarnesyl-DMAO methyl ester by the FAD-dependent monooxygenase adrH. The terpene cyclase adrI then catalyzes the carbon skeletal rearrangement to generate the andrastin E, the first compound in the pathway having the andrastin scaffold, with the tetracyclic ring system. The post-cyclization tailoring enzymes adrF, adrE, adrJ, and adrA, are involved in the conversion of andrastin E into andrastin A. The short chain dehydrogenase adrF is responsible for the oxidation of the C-3 a hydroxyl group of andrastin E to yield the corresponding ketone, andrastin D. The ketoreductase adrE stereoselectively reduces the carbonyl moiety to reverse the stereochemistry of the C-3 position to yield andrastin F. The acetyltransferase adrJ is the acetyltransferase that attaches the acetyl group to the C-3 hydroxyl group of andrastin F to yield andrastin C. Finally, the cytochrome P450 monooxygenase adrA catalyzes two sequential oxidation reactions of the C-23 methyl group, to generate the corresponding alcohol andrastin B, and aldehyde andrastin A. The chain is Acetyltransferase adrJ from Penicillium rubens (strain ATCC 28089 / DSM 1075 / NRRL 1951 / Wisconsin 54-1255) (Penicillium chrysogenum).